Consider the following 352-residue polypeptide: Outer membrane protein assembly factor BamC (352 aa).

The first 24 residues, 1 to 24, serve as a signal peptide directing secretion; it reads MAISLQKSTVVKVVGVSLVMLLAA. A lipid anchor (N-palmitoyl cysteine) is attached at C25. C25 carries S-diacylglycerol cysteine lipidation.

The protein belongs to the BamC family. As to quaternary structure, part of the Bam complex, which is composed of the outer membrane protein BamA, and four lipoproteins BamB, BamC, BamD and BamE.

The protein localises to the cell outer membrane. Part of the outer membrane protein assembly complex, which is involved in assembly and insertion of beta-barrel proteins into the outer membrane. The protein is Outer membrane protein assembly factor BamC of Yersinia pestis.